The chain runs to 479 residues: Siroheme synthase (479 aa).

Positions 1–202 (MNYLPIFLDL…GRDSEAEAQL (202 aa)) are precorrin-2 dehydrogenase /sirohydrochlorin ferrochelatase. NAD(+)-binding positions include 22-23 (ET) and 43-44 (PA). S128 is subject to Phosphoserine. Residues 217–479 (GEVYLVGAGP…TPLEAPDHLA (263 aa)) form a uroporphyrinogen-III C-methyltransferase region. P226 serves as a coordination point for S-adenosyl-L-methionine. D249 functions as the Proton acceptor in the catalytic mechanism. The active-site Proton donor is the K271. S-adenosyl-L-methionine-binding positions include 302-304 (GGD), I307, 332-333 (TA), M384, and G413.

It in the N-terminal section; belongs to the precorrin-2 dehydrogenase / sirohydrochlorin ferrochelatase family. The protein in the C-terminal section; belongs to the precorrin methyltransferase family.

It catalyses the reaction uroporphyrinogen III + 2 S-adenosyl-L-methionine = precorrin-2 + 2 S-adenosyl-L-homocysteine + H(+). It carries out the reaction precorrin-2 + NAD(+) = sirohydrochlorin + NADH + 2 H(+). The catalysed reaction is siroheme + 2 H(+) = sirohydrochlorin + Fe(2+). The protein operates within cofactor biosynthesis; adenosylcobalamin biosynthesis; precorrin-2 from uroporphyrinogen III: step 1/1. It participates in cofactor biosynthesis; adenosylcobalamin biosynthesis; sirohydrochlorin from precorrin-2: step 1/1. It functions in the pathway porphyrin-containing compound metabolism; siroheme biosynthesis; precorrin-2 from uroporphyrinogen III: step 1/1. Its pathway is porphyrin-containing compound metabolism; siroheme biosynthesis; siroheme from sirohydrochlorin: step 1/1. The protein operates within porphyrin-containing compound metabolism; siroheme biosynthesis; sirohydrochlorin from precorrin-2: step 1/1. Multifunctional enzyme that catalyzes the SAM-dependent methylations of uroporphyrinogen III at position C-2 and C-7 to form precorrin-2 via precorrin-1. Then it catalyzes the NAD-dependent ring dehydrogenation of precorrin-2 to yield sirohydrochlorin. Finally, it catalyzes the ferrochelation of sirohydrochlorin to yield siroheme. This Thiobacillus denitrificans (strain ATCC 25259 / T1) protein is Siroheme synthase.